A 151-amino-acid chain; its full sequence is Small ribosomal subunit protein uS15 (151 aa).

Belongs to the universal ribosomal protein uS15 family.

The chain is Small ribosomal subunit protein uS15 (RPS13) from Wuchereria bancrofti.